Reading from the N-terminus, the 126-residue chain is Phosphoribosyl-AMP cyclohydrolase (126 aa).

D73 lines the Mg(2+) pocket. C74 serves as a coordination point for Zn(2+). Mg(2+) is bound by residues D75 and D77. The Zn(2+) site is built by C91 and C98.

This sequence belongs to the PRA-CH family. As to quaternary structure, homodimer. It depends on Mg(2+) as a cofactor. Zn(2+) is required as a cofactor.

Its subcellular location is the cytoplasm. The enzyme catalyses 1-(5-phospho-beta-D-ribosyl)-5'-AMP + H2O = 1-(5-phospho-beta-D-ribosyl)-5-[(5-phospho-beta-D-ribosylamino)methylideneamino]imidazole-4-carboxamide. It participates in amino-acid biosynthesis; L-histidine biosynthesis; L-histidine from 5-phospho-alpha-D-ribose 1-diphosphate: step 3/9. Catalyzes the hydrolysis of the adenine ring of phosphoribosyl-AMP. This chain is Phosphoribosyl-AMP cyclohydrolase, found in Solibacter usitatus (strain Ellin6076).